Reading from the N-terminus, the 100-residue chain is Cell division protein FtsB (100 aa).

The Cytoplasmic segment spans residues 1–3; the sequence is MKW. Residues 4–21 traverse the membrane as a helical segment; that stretch reads LAIILVVALLALQYRLWM. The Periplasmic segment spans residues 22 to 100; sequence GEGSIASVVS…TDKDTKKNKK (79 aa). Residues 26 to 73 are a coiled coil; it reads IASVVSLNREIAKQKEENARLRERNRLLAAEVDALKQGKDAIEERARN.

The protein belongs to the FtsB family. In terms of assembly, part of a complex composed of FtsB, FtsL and FtsQ.

The protein resides in the cell inner membrane. Its function is as follows. Essential cell division protein. May link together the upstream cell division proteins, which are predominantly cytoplasmic, with the downstream cell division proteins, which are predominantly periplasmic. The sequence is that of Cell division protein FtsB from Saccharophagus degradans (strain 2-40 / ATCC 43961 / DSM 17024).